Consider the following 136-residue polypeptide: Cell division protein SepF 3 (136 aa).

The protein belongs to the SepF family. Homodimer. Interacts with FtsZ.

Its subcellular location is the cytoplasm. Its function is as follows. Cell division protein that is part of the divisome complex and is recruited early to the Z-ring. Probably stimulates Z-ring formation, perhaps through the cross-linking of FtsZ protofilaments. Its function overlaps with FtsA. The chain is Cell division protein SepF 3 from Streptomyces coelicolor (strain ATCC BAA-471 / A3(2) / M145).